The following is a 98-amino-acid chain: NADH-ubiquinone oxidoreductase chain 4L (98 aa).

The next 2 membrane-spanning stretches (helical) occupy residues 1-21 and 48-68; these read MTLIHFSFCSAFILGLTGLAL and PLHLTIYLSSMMLYIMLPFAA.

This sequence belongs to the complex I subunit 4L family. In terms of assembly, core subunit of respiratory chain NADH dehydrogenase (Complex I) which is composed of 45 different subunits.

The protein resides in the mitochondrion inner membrane. The catalysed reaction is a ubiquinone + NADH + 5 H(+)(in) = a ubiquinol + NAD(+) + 4 H(+)(out). Its function is as follows. Core subunit of the mitochondrial membrane respiratory chain NADH dehydrogenase (Complex I) which catalyzes electron transfer from NADH through the respiratory chain, using ubiquinone as an electron acceptor. Part of the enzyme membrane arm which is embedded in the lipid bilayer and involved in proton translocation. The protein is NADH-ubiquinone oxidoreductase chain 4L (mt-nd4l) of Xenopus laevis (African clawed frog).